Reading from the N-terminus, the 623-residue chain is Xaa-Pro aminopeptidase 1 (623 aa).

A peptide is bound at residue arginine 77. Residue lysine 304 is modified to N6-acetyllysine. Histidine 395 is a binding site for a peptide. Positions 415, 426, and 489 each coordinate Mn(2+). A peptide contacts are provided by histidine 489, histidine 498, and glutamate 523. Positions 523 and 537 each coordinate Mn(2+).

It belongs to the peptidase M24B family. In terms of assembly, homodimer. It depends on Mn(2+) as a cofactor.

Its subcellular location is the cytoplasm. The protein resides in the cytosol. It carries out the reaction Release of any N-terminal amino acid, including proline, that is linked to proline, even from a dipeptide or tripeptide.. Its function is as follows. Metalloaminopeptidase that catalyzes the removal of a penultimate prolyl residue from the N-termini of peptides, such as Arg-Pro-Pro. Contributes to the degradation of bradykinin. The sequence is that of Xaa-Pro aminopeptidase 1 from Mus musculus (Mouse).